The following is a 171-amino-acid chain: Endoribonuclease YbeY (171 aa).

Zn(2+)-binding residues include His-130, His-134, and His-140.

It belongs to the endoribonuclease YbeY family. The cofactor is Zn(2+).

The protein resides in the cytoplasm. In terms of biological role, single strand-specific metallo-endoribonuclease involved in late-stage 70S ribosome quality control and in maturation of the 3' terminus of the 16S rRNA. The sequence is that of Endoribonuclease YbeY from Neisseria meningitidis serogroup C / serotype 2a (strain ATCC 700532 / DSM 15464 / FAM18).